The primary structure comprises 60 residues: Large ribosomal subunit protein uL30 (60 aa).

This sequence belongs to the universal ribosomal protein uL30 family. As to quaternary structure, part of the 50S ribosomal subunit.

This is Large ribosomal subunit protein uL30 from Cutibacterium acnes (strain DSM 16379 / KPA171202) (Propionibacterium acnes).